The following is a 406-amino-acid chain: Uronyl 2-sulfotransferase (406 aa).

Over 1-49 (MKKKQQHPGGGADPWPHGAPMGGAPPGLGSWKRRVPLLPFLRFSLRDYG) the chain is Cytoplasmic. A helical; Signal-anchor for type II membrane protein transmembrane segment spans residues 50–70 (FCMATLLVFCLGSLLYQLSGG). At 71-406 (PPRFLLDLRQ…EKWLEDIYKR (336 aa)) the chain is on the lumenal side. N-linked (GlcNAc...) asparagine glycosylation is found at Asn84, Asn140, and Asn155. The active site involves His168. 2 N-linked (GlcNAc...) asparagine glycosylation sites follow: Asn173 and Asn319. Residues 387–399 (EPIDDEEQDDEKW) show a composition bias toward acidic residues. The tract at residues 387–406 (EPIDDEEQDDEKWLEDIYKR) is disordered.

This sequence belongs to the sulfotransferase 3 family. Widely expressed.

The protein localises to the golgi apparatus membrane. Functionally, sulfotransferase that catalyzes the transfer of sulfate to the position 2 of uronyl residues in glycosaminoglycan chains. Has mainly activity toward iduronyl residues in dermatan sulfate, and weaker activity toward glucuronyl residues of chondroitin sulfate. Has little to no activity toward desulfated N-resulfated heparin or N-sulfoheparosan. In Homo sapiens (Human), this protein is Uronyl 2-sulfotransferase.